The sequence spans 161 residues: Large ribosomal subunit protein uL11 (161 aa).

This sequence belongs to the universal ribosomal protein uL11 family. In terms of assembly, part of the ribosomal stalk of the 50S ribosomal subunit. Interacts with L10 and the large rRNA to form the base of the stalk. L10 forms an elongated spine to which L12 dimers bind in a sequential fashion forming a multimeric L10(L12)X complex.

Functionally, forms part of the ribosomal stalk which helps the ribosome interact with GTP-bound translation factors. The polypeptide is Large ribosomal subunit protein uL11 (Methanosarcina barkeri (strain Fusaro / DSM 804)).